Here is a 199-residue protein sequence, read N- to C-terminus: uncharacterized protein (199 aa).

A helical membrane pass occupies residues 7–27; the sequence is FWFWLILGIIALFIIVKAIVI.

Belongs to the band 7/mec-2 family.

It localises to the membrane. This is an uncharacterized protein from Methanocaldococcus jannaschii (strain ATCC 43067 / DSM 2661 / JAL-1 / JCM 10045 / NBRC 100440) (Methanococcus jannaschii).